A 162-amino-acid polypeptide reads, in one-letter code: Small ribosomal subunit protein uS7m (162 aa).

This sequence belongs to the universal ribosomal protein uS7 family. In terms of assembly, part of the small ribosomal subunit.

It localises to the mitochondrion. Functionally, one of the primary rRNA binding proteins, it binds directly to 16S-like rRNA where it nucleates assembly of the head domain of the small subunit. The sequence is that of Small ribosomal subunit protein uS7m (mrps7) from Dictyostelium discoideum (Social amoeba).